The primary structure comprises 587 residues: Zinc finger protein 69 (587 aa).

Residues 42–128 form a disordered region; it reads NGTQQESLAD…TPGTTAAGSQ (87 aa). The 72-residue stretch at 76 to 147 folds into the KRAB domain; that stretch reads HDEATPGTPA…VDLSQEEWGQ (72 aa). C2H2-type zinc fingers lie at residues 271 to 293, 299 to 321, 327 to 349, 355 to 377, 383 to 405, 411 to 433, 439 to 461, 467 to 489, and 495 to 517; these read HKKK…ILEQ, KPAR…CMRA, NVCE…HTGE, KECG…HTGE, EECG…HTGE, DKCQ…HSGE, SECG…HTGE, TSCC…HTGE, and KECG…HTGV. Positions 564 to 587 are disordered; the sequence is SRHQKIHRRNTFRDDPGHENKRQL. Residues 574 to 587 are compositionally biased toward basic and acidic residues; sequence TFRDDPGHENKRQL.

This sequence belongs to the krueppel C2H2-type zinc-finger protein family.

It is found in the nucleus. Its function is as follows. Putative transcription factor that appears to regulate lipid metabolism. The protein is Zinc finger protein 69 of Mus musculus (Mouse).